The sequence spans 65 residues: U12-theraphotoxin-Cg1a (65 aa).

Positions 1 to 21 (MKTSVLLFMLGLTFLFDGLAA) are cleaved as a signal peptide. The propeptide occupies 22–29 (INLQEGER). 3 cysteine pairs are disulfide-bonded: cysteine 31/cysteine 45, cysteine 38/cysteine 50, and cysteine 44/cysteine 57.

This sequence belongs to the neurotoxin 10 (Hwtx-1) family. 31 (Jztx-15) subfamily. In terms of tissue distribution, expressed by the venom gland.

It is found in the secreted. Probable ion channel inhibitor. The sequence is that of U12-theraphotoxin-Cg1a from Chilobrachys guangxiensis (Chinese earth tiger tarantula).